Reading from the N-terminus, the 406-residue chain is Dematin (406 aa).

Disordered regions lie at residues Met1–Ile30 and Leu78–Asn333. The segment covering Ser11–Ser29 has biased composition (low complexity). A phosphoserine mark is found at Ser16, Ser18, Ser26, Ser92, Ser96, Ser105, Ser110, Ser113, Ser157, and Ser227. Polar residues predominate over residues Ser105–Ala114. Residues Glu217–Gly228 are compositionally biased toward acidic residues. The interval Asp225 to Pro309 is interaction with RASGRF2. Basic and acidic residues-rich tracts occupy residues Glu229 to Ser243 and Ile253 to Leu262. 8 positions are modified to phosphoserine: Ser270, Ser280, Ser290, Ser304, Ser316, Ser334, Ser373, and Ser384. Polar residues predominate over residues His282–Glu323. An HP domain is found at Val338–Phe406. Phosphoserine; by PKA is present on Ser404.

This sequence belongs to the villin/gelsolin family. In terms of assembly, monomeric; under reducing conditions. Self-associates. Exists under oxidizing condition as a trimer linked by disulfide bonds. Found in a complex with DMTN, F-actin and spectrin. Found in a complex with ADD2, DMTN and SLC2A1. Interacts with F-actin, ITPKB and spectrin. Interacts with SLC2A1 (via C-terminus cytoplasmic region). Interacts with RASGRF2. Post-translationally, phosphorylated. Phosphorylation at Ser-404 by PKA causes the C-terminal headpiece domain to associate with the N-terminal core domain, and leads to the inhibition of its actin bundling activity.

It is found in the cytoplasm. It localises to the cytosol. The protein resides in the perinuclear region. Its subcellular location is the cytoskeleton. The protein localises to the cell membrane. It is found in the membrane. It localises to the endomembrane system. The protein resides in the cell projection. Its function is as follows. Membrane-cytoskeleton-associated protein with F-actin-binding activity that induces F-actin bundles formation and stabilization. Its F-actin-bundling activity is reversibly regulated upon its phosphorylation by the cAMP-dependent protein kinase A (PKA). Binds to the erythrocyte membrane glucose transporter-1 SLC2A1/GLUT1, and hence stabilizes and attaches the spectrin-actin network to the erythrocytic plasma membrane. Plays a role in maintaining the functional integrity of PKA-activated erythrocyte shape and the membrane mechanical properties. Also plays a role as a modulator of actin dynamics in fibroblasts; acts as a negative regulator of the RhoA activation pathway. In platelets, functions as a regulator of internal calcium mobilization across the dense tubular system that affects platelet granule secretion pathways and aggregation. Also required for the formation of a diverse set of cell protrusions, such as filopodia and lamellipodia, necessary for platelet cell spreading, motility and migration. Acts as a tumor suppressor and inhibits malignant cell transformation. This is Dematin (DMTN) from Bos taurus (Bovine).